The primary structure comprises 276 residues: Rhomboid protease GlpG (276 aa).

The next 6 helical transmembrane spans lie at 94 to 114 (GPVT…MQIL), 142 to 162 (ALMH…WYLG), 169 to 189 (LGSG…GYVQ), 192 to 212 (FSGP…GYVW), 229 to 249 (LIIF…GMSM), and 250 to 270 (ANGA…VDSL). The Nucleophile role is filled by serine 201. Histidine 254 is an active-site residue.

Belongs to the peptidase S54 family.

It is found in the cell inner membrane. It catalyses the reaction Cleaves type-1 transmembrane domains using a catalytic dyad composed of serine and histidine that are contributed by different transmembrane domains.. Rhomboid-type serine protease that catalyzes intramembrane proteolysis. The chain is Rhomboid protease GlpG from Shigella flexneri serotype 5b (strain 8401).